The chain runs to 630 residues: Ubiquitin carboxyl-terminal hydrolase MINDY-2 (630 aa).

A disordered region spans residues 1–209 (MESGPESLQP…RVPEEEEGAA (209 aa)). A compositionally biased stretch (polar residues) spans 24-33 (GSPQEGQQET). Ser94 is modified (phosphoserine). 2 stretches are compositionally biased toward low complexity: residues 141–163 (EESA…SCSD) and 170–191 (SPSL…SSEF). Cys267 acts as the Nucleophile in catalysis. His449 serves as the catalytic Proton acceptor. The ubiquitin-binding domain (UBD) stretch occupies residues 508 to 560 (GQQDQIDQDYLMALSLQQEQQSQEINWEQIPEGISDLELAKKLQEEEDRRASQ). The span at 564-599 (EQEQAAAAAASASASASASASTQAPQSQPVQASPSS) shows a compositional bias: low complexity. The interval 564 to 630 (EQEQAAAAAA…EKEKNSCVIL (67 aa)) is disordered. The span at 606–630 (SERKRKEPREKDKEKEKEKNSCVIL) shows a compositional bias: basic and acidic residues.

It belongs to the MINDY deubiquitinase family. FAM63 subfamily.

It catalyses the reaction Thiol-dependent hydrolysis of ester, thioester, amide, peptide and isopeptide bonds formed by the C-terminal Gly of ubiquitin (a 76-residue protein attached to proteins as an intracellular targeting signal).. Hydrolase that can remove 'Lys-48'-linked conjugated ubiquitin from proteins. Can also bind to polyubiquitin chains of different linkage types, including 'Lys-6', 'Lys-11', 'Lys-29', 'Lys-33' and 'Lys-63'. May play a regulatory role at the level of protein turnover. This Bos taurus (Bovine) protein is Ubiquitin carboxyl-terminal hydrolase MINDY-2 (MINDY2).